Consider the following 205-residue polypeptide: Ras-like protein 3 (205 aa).

Position 16 to 23 (16 to 23) interacts with GTP; sequence GGGGVGKS. Positions 38-46 match the Effector region motif; that stretch reads YDPTIEDSY. GTP is bound by residues 63 to 67 and 122 to 125; these read DTAGQ and NKCD. C202 is modified (cysteine methyl ester). C202 carries the S-farnesyl cysteine lipid modification. A propeptide spans 203 to 205 (removed in mature form); sequence ILM.

The protein belongs to the small GTPase superfamily. Ras family.

The protein resides in the cell membrane. The enzyme catalyses GTP + H2O = GDP + phosphate + H(+). Alternates between an inactive form bound to GDP and an active form bound to GTP. Activated by a guanine nucleotide-exchange factor (GEF) and inactivated by a GTPase-activating protein (GAP). The chain is Ras-like protein 3 (RAS3) from Mucor circinelloides f. lusitanicus (Mucor racemosus var. lusitanicus).